Consider the following 129-residue polypeptide: 4-amino-4-deoxychorismate mutase (129 aa).

A Chorismate mutase domain is found at 16–107 (AAATDPLDAL…ETCRLEDEWI (92 aa)).

It carries out the reaction 4-amino-4-deoxychorismate = 4-amino-4-deoxyprephenate. It participates in antibiotic biosynthesis. In terms of biological role, involved in pristinamycin I biosynthesis. Probably catalyzes the conversion of 4-amino-4-deoxychorismate to 4-amino-4-deoxyprephenate. The chain is 4-amino-4-deoxychorismate mutase from Streptomyces pristinaespiralis.